The primary structure comprises 178 residues: Large ribosomal subunit protein uL10 (178 aa).

It belongs to the universal ribosomal protein uL10 family. In terms of assembly, part of the ribosomal stalk of the 50S ribosomal subunit. The N-terminus interacts with L11 and the large rRNA to form the base of the stalk. The C-terminus forms an elongated spine to which L12 dimers bind in a sequential fashion forming a multimeric L10(L12)X complex.

Forms part of the ribosomal stalk, playing a central role in the interaction of the ribosome with GTP-bound translation factors. The sequence is that of Large ribosomal subunit protein uL10 from Stenotrophomonas maltophilia (strain R551-3).